An 853-amino-acid polypeptide reads, in one-letter code: A-kinase anchor protein 3 (853 aa).

Positions 124 to 137 (VSFYANRLTNLVIA) are PKA-RII subunit binding domain. Residues 188 to 240 (RNAAPDKAPGSGDRVSGSSQSPPNLKYKSTLKIKESTKERQGPDDKPPSKKSF) are disordered. 2 positions are modified to phosphoserine: Ser-205 and Ser-208. A compositionally biased stretch (basic and acidic residues) spans 219–235 (KIKESTKERQGPDDKPP). Phosphoserine is present on Ser-403. Tyr-404 is subject to Phosphotyrosine. Phosphoserine occurs at positions 635 and 636.

This sequence belongs to the AKAP110 family. As to quaternary structure, interacts with ROPN1 and ROPN1L. Interacts with QRICH2. Phosphorylated by STK33 during sperm flagella assembly. Phosphorylated on tyrosine residues. Testis specific; only expressed in spermatids.

The protein resides in the cytoplasmic vesicle. It is found in the secretory vesicle. It localises to the acrosome. Its subcellular location is the cell projection. The protein localises to the cilium. The protein resides in the flagellum. In terms of biological role, structural component of sperm fibrous sheath. Required for the formation of the subcellular structure of the sperm flagellum, sperm motility and male fertility. This Homo sapiens (Human) protein is A-kinase anchor protein 3.